The chain runs to 165 residues: uncharacterized protein (165 aa).

The signal sequence occupies residues 1-17 (MIRGFFLILLFLLLAFF).

This is an uncharacterized protein from Aquifex aeolicus (strain VF5).